Here is a 156-residue protein sequence, read N- to C-terminus: Large ribosomal subunit protein uL15 (156 aa).

The segment covering 1-11 (MKLNDLRDKPG) has biased composition (basic and acidic residues). The interval 1 to 44 (MKLNDLRDKPGSVKARKRVGRGIGSGTGKTGGRGVKGQKSRSGV) is disordered. Residues 21 to 35 (RGIGSGTGKTGGRGV) are compositionally biased toward gly residues.

This sequence belongs to the universal ribosomal protein uL15 family. As to quaternary structure, part of the 50S ribosomal subunit.

Functionally, binds to the 23S rRNA. The chain is Large ribosomal subunit protein uL15 from Brucella abortus (strain S19).